Here is a 121-residue protein sequence, read N- to C-terminus: Small ribosomal subunit protein uS13 (121 aa).

The segment at 88–121 (GMRHRRGLPVRGQHTKNNARTRKGKAVAIANKKK) is disordered.

It belongs to the universal ribosomal protein uS13 family. As to quaternary structure, part of the 30S ribosomal subunit. Forms a loose heterodimer with protein S19. Forms two bridges to the 50S subunit in the 70S ribosome.

Functionally, located at the top of the head of the 30S subunit, it contacts several helices of the 16S rRNA. In the 70S ribosome it contacts the 23S rRNA (bridge B1a) and protein L5 of the 50S subunit (bridge B1b), connecting the 2 subunits; these bridges are implicated in subunit movement. Contacts the tRNAs in the A and P-sites. In Limosilactobacillus reuteri subsp. reuteri (strain JCM 1112) (Lactobacillus reuteri), this protein is Small ribosomal subunit protein uS13.